Here is a 45-residue protein sequence, read N- to C-terminus: MIMGKDRQEKKLKASGRVESDRDQSIHYDGATSLEQNGRFKKRKS.

Basic and acidic residues predominate over residues 1 to 26 (MIMGKDRQEKKLKASGRVESDRDQSI). The tract at residues 1–45 (MIMGKDRQEKKLKASGRVESDRDQSIHYDGATSLEQNGRFKKRKS) is disordered.

This is an uncharacterized protein from Bacillus subtilis (strain 168).